A 448-amino-acid chain; its full sequence is uncharacterized protein (448 aa).

The uDENN domain maps to 4–155; it reads QAIVLATFDA…SAVNLEFDSL (152 aa). The 144-residue stretch at 183–326 folds into the cDENN domain; sequence LDHLGPAFYC…FKGLSRYLSF (144 aa). A dDENN domain is found at 328–428; it reads GESSWGLTTY…WQYGKYFWLR (101 aa). The chain crosses the membrane as a helical span at residues 425-447; that stretch reads FWLRRVSLIFLASTCFLFILWKL.

The protein localises to the golgi apparatus membrane. Its subcellular location is the endoplasmic reticulum membrane. This is an uncharacterized protein from Schizosaccharomyces pombe (strain 972 / ATCC 24843) (Fission yeast).